A 480-amino-acid chain; its full sequence is Protein nucleotidyltransferase YdiU (480 aa).

ATP is bound by residues Gly-86, Gly-88, Arg-89, Lys-109, Asp-121, Gly-122, Arg-172, and Arg-179. The active-site Proton acceptor is Asp-248. Residues Asn-249 and Asp-258 each coordinate Mg(2+). Residue Asp-258 coordinates ATP.

This sequence belongs to the SELO family. The cofactor is Mg(2+). Mn(2+) is required as a cofactor.

The enzyme catalyses L-seryl-[protein] + ATP = 3-O-(5'-adenylyl)-L-seryl-[protein] + diphosphate. It carries out the reaction L-threonyl-[protein] + ATP = 3-O-(5'-adenylyl)-L-threonyl-[protein] + diphosphate. It catalyses the reaction L-tyrosyl-[protein] + ATP = O-(5'-adenylyl)-L-tyrosyl-[protein] + diphosphate. The catalysed reaction is L-histidyl-[protein] + UTP = N(tele)-(5'-uridylyl)-L-histidyl-[protein] + diphosphate. The enzyme catalyses L-seryl-[protein] + UTP = O-(5'-uridylyl)-L-seryl-[protein] + diphosphate. It carries out the reaction L-tyrosyl-[protein] + UTP = O-(5'-uridylyl)-L-tyrosyl-[protein] + diphosphate. Functionally, nucleotidyltransferase involved in the post-translational modification of proteins. It can catalyze the addition of adenosine monophosphate (AMP) or uridine monophosphate (UMP) to a protein, resulting in modifications known as AMPylation and UMPylation. The chain is Protein nucleotidyltransferase YdiU from Salmonella agona (strain SL483).